Consider the following 544-residue polypeptide: CTP synthase (544 aa).

The segment at 1-265 (MTQYIFITGG…DDLVVKHFGL (265 aa)) is amidoligase domain. S13 lines the CTP pocket. UTP is bound at residue S13. Residues 14-19 (SLGKGI) and D71 contribute to the ATP site. Mg(2+) is bound by residues D71 and E139. Residues 146-148 (DIE), 186-191 (KTKPTQ), and K222 each bind CTP. UTP is bound by residues 186–191 (KTKPTQ) and K222. Residues 290-541 (TVAMVGKYVN…IAAALDYQTE (252 aa)) enclose the Glutamine amidotransferase type-1 domain. G351 contributes to the L-glutamine binding site. C378 (nucleophile; for glutamine hydrolysis) is an active-site residue. Residues 379 to 382 (LGLQ), E402, and R469 contribute to the L-glutamine site. Catalysis depends on residues H514 and E516.

It belongs to the CTP synthase family. As to quaternary structure, homotetramer.

The enzyme catalyses UTP + L-glutamine + ATP + H2O = CTP + L-glutamate + ADP + phosphate + 2 H(+). The catalysed reaction is L-glutamine + H2O = L-glutamate + NH4(+). It catalyses the reaction UTP + NH4(+) + ATP = CTP + ADP + phosphate + 2 H(+). The protein operates within pyrimidine metabolism; CTP biosynthesis via de novo pathway; CTP from UDP: step 2/2. With respect to regulation, allosterically activated by GTP, when glutamine is the substrate; GTP has no effect on the reaction when ammonia is the substrate. The allosteric effector GTP functions by stabilizing the protein conformation that binds the tetrahedral intermediate(s) formed during glutamine hydrolysis. Inhibited by the product CTP, via allosteric rather than competitive inhibition. Functionally, catalyzes the ATP-dependent amination of UTP to CTP with either L-glutamine or ammonia as the source of nitrogen. Regulates intracellular CTP levels through interactions with the four ribonucleotide triphosphates. This chain is CTP synthase, found in Dichelobacter nodosus (strain VCS1703A).